The sequence spans 337 residues: m7GpppX diphosphatase (337 aa).

The segment at 1–37 (MAELAHQQSKRKRELDAEEAEASSTEGEEAGVGNGTS) is disordered. An N-acetylalanine modification is found at Ala2. Positions 10 to 13 (KRKR) match the nuclear localization signal (NLS) motif. A compositionally biased stretch (acidic residues) spans 16 to 29 (DAEEAEASSTEGEE). Ser24 and Ser101 each carry phosphoserine. Lys138 and Lys142 each carry N6-acetyllysine. The short motif at 142–154 (KYLRQDLHLVRET) is the nuclear export sequence (NES) element. Residues Trp175, Glu185, Asp205, Lys207, and 268–279 (HYLPSYYHLHVH) each bind substrate. A Histidine triad motif motif is present at residues 275 to 279 (HLHVH). The Nucleophile role is filled by His277.

It belongs to the HIT family. In terms of assembly, homodimer. Associates with components of the exosome multienzyme ribonuclease complex, such as EXOSC3 and EXOSC4. Interacts with NDOR1.

It is found in the cytoplasm. The protein resides in the nucleus. It carries out the reaction a 5'-end (N(7)-methyl 5'-triphosphoguanosine)-ribonucleoside in mRNA + H2O = N(7)-methyl-GMP + a 5'-end diphospho-ribonucleoside in mRNA + 2 H(+). Its activity is regulated as follows. The hydrolytic product 7-methylguanosine diphosphate (m7GDP) efficiently inhibits the decapping scavenger activity and acts as a competitive inhibitor in vitro. Inhibited by 2,4-diaminoquinazoline. In terms of biological role, decapping scavenger enzyme that catalyzes the cleavage of a residual cap structure following the degradation of mRNAs by 3'-&gt;5' exosome-mediated mRNA decay pathway. Hydrolyzes cap analog structures like 7-methylguanosine nucleoside triphosphate (m7GpppG) with up to 10 nucleotide substrates (small capped oligoribonucleotides) and specifically releases 5'-phosphorylated RNA fragments and 7-methylguanosine monophosphate (m7GMP). Cleaves cap analog structures like tri-methyl guanosine nucleoside triphosphate (m3(2,2,7)GpppG) with very poor efficiency. Does not hydrolyze unmethylated cap analog (GpppG) and shows no decapping activity on intact m7GpppG-capped mRNA molecules longer than 25 nucleotides. Does not hydrolyze 7-methylguanosine diphosphate (m7GDP) to m7GMP. May also play a role in the 5'-&gt;3 mRNA decay pathway; m7GDP, the downstream product released by the 5'-&gt;3' mRNA mediated decapping activity, may be also converted by DCPS to m7GMP. Binds to m7GpppG and strongly to m7GDP. Plays a role in first intron splicing of pre-mRNAs. Inhibits activation-induced cell death. This Bos taurus (Bovine) protein is m7GpppX diphosphatase (DCPS).